Here is a 487-residue protein sequence, read N- to C-terminus: Protein nucleotidyltransferase YdiU (487 aa).

Residues Gly90, Gly92, Arg93, Lys113, Asp125, Gly126, Arg176, and Arg183 each contribute to the ATP site. Catalysis depends on Asp252, which acts as the Proton acceptor. Mg(2+)-binding residues include Asn253 and Asp262. Asp262 contributes to the ATP binding site.

Belongs to the SELO family. The cofactor is Mg(2+). Requires Mn(2+) as cofactor.

The catalysed reaction is L-seryl-[protein] + ATP = 3-O-(5'-adenylyl)-L-seryl-[protein] + diphosphate. It catalyses the reaction L-threonyl-[protein] + ATP = 3-O-(5'-adenylyl)-L-threonyl-[protein] + diphosphate. The enzyme catalyses L-tyrosyl-[protein] + ATP = O-(5'-adenylyl)-L-tyrosyl-[protein] + diphosphate. It carries out the reaction L-histidyl-[protein] + UTP = N(tele)-(5'-uridylyl)-L-histidyl-[protein] + diphosphate. The catalysed reaction is L-seryl-[protein] + UTP = O-(5'-uridylyl)-L-seryl-[protein] + diphosphate. It catalyses the reaction L-tyrosyl-[protein] + UTP = O-(5'-uridylyl)-L-tyrosyl-[protein] + diphosphate. Nucleotidyltransferase involved in the post-translational modification of proteins. It can catalyze the addition of adenosine monophosphate (AMP) or uridine monophosphate (UMP) to a protein, resulting in modifications known as AMPylation and UMPylation. This is Protein nucleotidyltransferase YdiU from Ectopseudomonas mendocina (strain ymp) (Pseudomonas mendocina).